Here is a 450-residue protein sequence, read N- to C-terminus: 3-phosphoshikimate 1-carboxyvinyltransferase (450 aa).

The segment at 1-26 is disordered; sequence MSGHGTPIPMTSRRASPLKGEAHVPG. K28, S29, and R33 together coordinate 3-phosphoshikimate. A phosphoenolpyruvate-binding site is contributed by K28. Phosphoenolpyruvate is bound by residues G101 and R129. 3-phosphoshikimate is bound by residues S174, Q176, D327, and K354. Residue Q176 coordinates phosphoenolpyruvate. D327 functions as the Proton acceptor in the catalytic mechanism. Phosphoenolpyruvate is bound by residues R358 and R403.

This sequence belongs to the EPSP synthase family. As to quaternary structure, monomer.

It is found in the cytoplasm. The catalysed reaction is 3-phosphoshikimate + phosphoenolpyruvate = 5-O-(1-carboxyvinyl)-3-phosphoshikimate + phosphate. It participates in metabolic intermediate biosynthesis; chorismate biosynthesis; chorismate from D-erythrose 4-phosphate and phosphoenolpyruvate: step 6/7. Its function is as follows. Catalyzes the transfer of the enolpyruvyl moiety of phosphoenolpyruvate (PEP) to the 5-hydroxyl of shikimate-3-phosphate (S3P) to produce enolpyruvyl shikimate-3-phosphate and inorganic phosphate. The polypeptide is 3-phosphoshikimate 1-carboxyvinyltransferase (Ruegeria sp. (strain TM1040) (Silicibacter sp.)).